Here is a 449-residue protein sequence, read N- to C-terminus: UDP-N-acetylmuramoylalanine--D-glutamate ligase (449 aa).

113–119 (GTNGKTT) provides a ligand contact to ATP.

It belongs to the MurCDEF family.

It is found in the cytoplasm. It carries out the reaction UDP-N-acetyl-alpha-D-muramoyl-L-alanine + D-glutamate + ATP = UDP-N-acetyl-alpha-D-muramoyl-L-alanyl-D-glutamate + ADP + phosphate + H(+). The protein operates within cell wall biogenesis; peptidoglycan biosynthesis. Its function is as follows. Cell wall formation. Catalyzes the addition of glutamate to the nucleotide precursor UDP-N-acetylmuramoyl-L-alanine (UMA). The protein is UDP-N-acetylmuramoylalanine--D-glutamate ligase of Gloeothece citriformis (strain PCC 7424) (Cyanothece sp. (strain PCC 7424)).